The chain runs to 178 residues: Putative metal-dependent hydrolase GTNG_0529 (178 aa).

Zn(2+) is bound by residues His68, His161, and His165.

It belongs to the metal hydrolase YfiT family. Homodimer. The cofactor is Zn(2+).

It localises to the cytoplasm. Functionally, possible metal-dependent hydrolase. The chain is Putative metal-dependent hydrolase GTNG_0529 from Geobacillus thermodenitrificans (strain NG80-2).